The sequence spans 424 residues: Type II methyltransferase M.BspRI (424 aa).

The 351-residue stretch at 58-408 (FNVLSLFCGA…KSIAQFAADY (351 aa)) folds into the SAM-dependent MTase C5-type domain. The S-methylcysteine intermediate role is filled by cysteine 156. S-methylcysteine; by autocatalysis is present on cysteine 181.

It belongs to the class I-like SAM-binding methyltransferase superfamily. C5-methyltransferase family. As to quaternary structure, monomer. In the absence of DNA, can self-methylate two cysteine residues.

It carries out the reaction a 2'-deoxycytidine in DNA + S-adenosyl-L-methionine = a 5-methyl-2'-deoxycytidine in DNA + S-adenosyl-L-homocysteine + H(+). A methylase, recognizes the double-stranded sequence 5'-GGCC-3', methylates C-3 on both strands, and protects the DNA from cleavage by the BspRI endonuclease. In Lysinibacillus sphaericus (Bacillus sphaericus), this protein is Type II methyltransferase M.BspRI (bspRIM).